A 525-amino-acid polypeptide reads, in one-letter code: Chromosomal replication initiator protein DnaA (525 aa).

Residues Met-1–Thr-71 are domain I, interacts with DnaA modulators. Positions Thr-71–Ser-188 are domain II. The segment at Ala-160 to Asp-182 is disordered. Low complexity predominate over residues Pro-169–Ala-181. Residues Lys-189 to Ser-405 are domain III, AAA+ region. Residues Gly-233, Gly-235, Lys-236, and Thr-237 each coordinate ATP. The tract at residues Lys-406–Gly-525 is domain IV, binds dsDNA.

Belongs to the DnaA family. As to quaternary structure, oligomerizes as a right-handed, spiral filament on DNA at oriC.

It is found in the cytoplasm. Its function is as follows. Plays an essential role in the initiation and regulation of chromosomal replication. ATP-DnaA binds to the origin of replication (oriC) to initiate formation of the DNA replication initiation complex once per cell cycle. Binds the DnaA box (a 9 base pair repeat at the origin) and separates the double-stranded (ds)DNA. Forms a right-handed helical filament on oriC DNA; dsDNA binds to the exterior of the filament while single-stranded (ss)DNA is stabiized in the filament's interior. The ATP-DnaA-oriC complex binds and stabilizes one strand of the AT-rich DNA unwinding element (DUE), permitting loading of DNA polymerase. After initiation quickly degrades to an ADP-DnaA complex that is not apt for DNA replication. Binds acidic phospholipids. The protein is Chromosomal replication initiator protein DnaA of Burkholderia orbicola (strain MC0-3).